The chain runs to 638 residues: Bromodomain-containing factor 2 (638 aa).

The segment covering 1–10 (MSRTNMDTRH) has biased composition (basic and acidic residues). A disordered region spans residues 1–54 (MSRTNMDTRHAHSALLAAPQSATANSRSSNSSSESSSNKNNINVGVGDDSGNVS). The segment covering 25–43 (NSRSSNSSSESSSNKNNIN) has biased composition (low complexity). Residues 130–239 (EAEELPPHQS…KYFEKKLSAM (110 aa)) enclose the Bromo 1 domain. The disordered stretch occupies residues 250–306 (KKTSRNRKKNEDMDSPLVIRRSVSTTNDNIGESGNREGVSGGRPKRTIHPPKSKDLF). The residue at position 264 (serine 264) is a Phosphoserine. A compositionally biased stretch (polar residues) spans 271–281 (SVSTTNDNIGE). Residues 317–426 (KTLQKKFRTC…ELFNFHWLEN (110 aa)) form the Bromo 2 domain. A disordered region spans residues 435–460 (TDSDLEEDNYSSSYSSDDEYDDEDIN). Positions 450–460 (SDDEYDDEDIN) are enriched in acidic residues. Residues 468 to 537 (AIQYLEQKLK…INELSDLEMN (70 aa)) adopt a coiled-coil conformation. The region spanning 506–590 (TLLRRKAMKH…EKKNNNNSKR (85 aa)) is the NET domain. Positions 586–638 (NNSKRKLSGNYSTAPTNKKKKTLKFLEKDEIINNNNYSDSEEDSSDSSDSDSD) are disordered. Over residues 624-638 (DSEEDSSDSSDSDSD) the composition is skewed to acidic residues.

Belongs to the BET family. As to quaternary structure, interacts with the TFIID subunit TAF7 and with histone H4. In terms of processing, phosphorylated by the casein kinase CK2 complex.

The protein localises to the cytoplasm. The protein resides in the nucleus. In terms of biological role, transcription factor involved in the expression of a broad class of genes including snRNAs. Required for sporulation and DNA-damage repair. Prevents the spreading of SIR silencing at telomeres and protects histone H4, but not H3, from deacetylation. The protein is Bromodomain-containing factor 2 (BDF2) of Saccharomyces cerevisiae (strain ATCC 204508 / S288c) (Baker's yeast).